Reading from the N-terminus, the 188-residue chain is V-type ATP synthase subunit E (188 aa).

This sequence belongs to the V-ATPase E subunit family.

In terms of biological role, produces ATP from ADP in the presence of a proton gradient across the membrane. This Thermus thermophilus (strain ATCC 27634 / DSM 579 / HB8) protein is V-type ATP synthase subunit E (atpE).